The following is a 223-amino-acid chain: Family of serine hydrolases 2 (223 aa).

Residues serine 110, aspartate 174, and histidine 203 each act as charge relay system in the active site.

It belongs to the AB hydrolase 3 family.

The protein localises to the cytoplasm. Functionally, serine hydrolase of unknown specificity. The sequence is that of Family of serine hydrolases 2 (FSH2) from Saccharomyces cerevisiae (strain ATCC 204508 / S288c) (Baker's yeast).